The primary structure comprises 510 residues: Holliday junction branch migration ATPase PINA (510 aa).

In terms of assembly, homohexamer. Interacts with Holliday junction resolvase Hjc, interacts with helicase Hjm (Hel308).

It catalyses the reaction ATP + H2O = ADP + phosphate + H(+). In terms of biological role, important for growth at low temperatures (less than 65 degrees Celsius in this organism). Promotes Holliday junction (HJ) branch migration and unwinds Y-shaped DNA (but not replication forks or dsDNA) in an ATP hydrolysis-dependent manner. Stimulates cleavage by HJ resolvase Hjc. Hjc, Hjm (Hel308) and PINA coordinate HJ migration and cleavage of replication forks in a coordinated way. Probably acts as an ATP-dependent pump that pulls DNA through the hexamer. This is Holliday junction branch migration ATPase PINA from Sulfolobus acidocaldarius (strain ATCC 33909 / DSM 639 / JCM 8929 / NBRC 15157 / NCIMB 11770).